A 665-amino-acid chain; its full sequence is Soluble lamin-associated protein of 75 kDa (665 aa).

A disordered region spans residues 309-665 (AFASTSEGPE…GPGKKKAKLT (357 aa)). Positions 311 to 326 (ASTSEGPEKTPVSTRT) are enriched in polar residues. Over residues 327-338 (RSSHLKRPKIGK) the composition is skewed to basic residues. S348 and S377 each carry phosphoserine. Residues 376–397 (SSEEFLEEEPEQGVIDFEDESG) are compositionally biased toward acidic residues. A compositionally biased stretch (basic and acidic residues) spans 412–421 (QKQDGDKDSA). Positions 440–451 (TEDEDSTSEGLE) are enriched in acidic residues. Residues S447 and S512 each carry the phosphoserine modification. Composition is skewed to polar residues over residues 521-533 (LGSS…VSNI) and 553-566 (VSQN…SSVE). Residues S610, S613, and S630 each carry the phosphoserine modification. Over residues 646 to 665 (NLRRKAKGHKGPGKKKAKLT) the composition is skewed to basic residues.

Belongs to the FAM169 family.

It localises to the nucleus envelope. Its subcellular location is the nucleus inner membrane. The sequence is that of Soluble lamin-associated protein of 75 kDa (Fam169a) from Mus musculus (Mouse).